A 352-amino-acid polypeptide reads, in one-letter code: Ketol-acid reductoisomerase (NAD(+)) (352 aa).

The 189-residue stretch at 11 to 199 (ENVVTSEEFT…AIGSGYLFPT (189 aa)) folds into the KARI N-terminal Rossmann domain. Residues 38-41 (YGVQ) and 100-103 (DAGQ) each bind NAD(+). Residue His-124 is part of the active site. An NAD(+)-binding site is contributed by Gly-153. One can recognise a KARI C-terminal knotted domain in the interval 200–347 (TFEKEVFSDL…AAVRALRPEN (148 aa)). Mg(2+)-binding residues include Asp-208, Glu-212, Glu-244, and Glu-248. Ser-270 lines the substrate pocket.

Belongs to the ketol-acid reductoisomerase family. The cofactor is Mg(2+).

It catalyses the reaction (2R)-2,3-dihydroxy-3-methylbutanoate + NAD(+) = (2S)-2-acetolactate + NADH + H(+). Its pathway is amino-acid biosynthesis; L-isoleucine biosynthesis; L-isoleucine from 2-oxobutanoate: step 2/4. The protein operates within amino-acid biosynthesis; L-valine biosynthesis; L-valine from pyruvate: step 2/4. Its function is as follows. Involved in the biosynthesis of branched-chain amino acids (BCAA). Catalyzes an alkyl-migration followed by a ketol-acid reduction of (S)-2-acetolactate (S2AL) to yield (R)-2,3-dihydroxy-isovalerate. In the isomerase reaction, S2AL is rearranged via a Mg-dependent methyl migration to produce 3-hydroxy-3-methyl-2-ketobutyrate (HMKB). In the reductase reaction, this 2-ketoacid undergoes a metal-dependent reduction by NADH to yield (R)-2,3-dihydroxy-isovalerate. This Desulfosudis oleivorans (strain DSM 6200 / JCM 39069 / Hxd3) (Desulfococcus oleovorans) protein is Ketol-acid reductoisomerase (NAD(+)).